Reading from the N-terminus, the 490-residue chain is Glutamyl-tRNA(Gln) amidotransferase subunit A (490 aa).

Catalysis depends on charge relay system residues lysine 81 and serine 156. The active-site Acyl-ester intermediate is serine 180.

Belongs to the amidase family. GatA subfamily. As to quaternary structure, heterotrimer of A, B and C subunits.

The catalysed reaction is L-glutamyl-tRNA(Gln) + L-glutamine + ATP + H2O = L-glutaminyl-tRNA(Gln) + L-glutamate + ADP + phosphate + H(+). In terms of biological role, allows the formation of correctly charged Gln-tRNA(Gln) through the transamidation of misacylated Glu-tRNA(Gln) in organisms which lack glutaminyl-tRNA synthetase. The reaction takes place in the presence of glutamine and ATP through an activated gamma-phospho-Glu-tRNA(Gln). This is Glutamyl-tRNA(Gln) amidotransferase subunit A from Nocardia farcinica (strain IFM 10152).